The chain runs to 82 residues: ATP synthase subunit c, chloroplastic (82 aa).

Transmembrane regions (helical) follow at residues 3 to 23 (PIISAASVIGAGLSIGLAAIG) and 57 to 77 (LAFMEALTIYGLVVALALLFA).

This sequence belongs to the ATPase C chain family. As to quaternary structure, F-type ATPases have 2 components, F(1) - the catalytic core - and F(0) - the membrane proton channel. F(1) has five subunits: alpha(3), beta(3), gamma(1), delta(1), epsilon(1). F(0) has four main subunits: a(1), b(1), b'(1) and c(10-14). The alpha and beta chains form an alternating ring which encloses part of the gamma chain. F(1) is attached to F(0) by a central stalk formed by the gamma and epsilon chains, while a peripheral stalk is formed by the delta, b and b' chains.

The protein resides in the plastid. Its subcellular location is the chloroplast thylakoid membrane. In terms of biological role, f(1)F(0) ATP synthase produces ATP from ADP in the presence of a proton or sodium gradient. F-type ATPases consist of two structural domains, F(1) containing the extramembraneous catalytic core and F(0) containing the membrane proton channel, linked together by a central stalk and a peripheral stalk. During catalysis, ATP synthesis in the catalytic domain of F(1) is coupled via a rotary mechanism of the central stalk subunits to proton translocation. Key component of the F(0) channel; it plays a direct role in translocation across the membrane. A homomeric c-ring of between 10-14 subunits forms the central stalk rotor element with the F(1) delta and epsilon subunits. The polypeptide is ATP synthase subunit c, chloroplastic (Phaeodactylum tricornutum (strain CCAP 1055/1)).